Here is an 81-residue protein sequence, read N- to C-terminus: uncharacterized protein (81 aa).

The interval 11–34 is disordered; that stretch reads GSVSSSNKVSVANGSSSSSFGSNG.

This is an uncharacterized protein from Dictyostelium discoideum (Social amoeba).